Consider the following 154-residue polypeptide: Probable transcription factor At4g00232 (154 aa).

Positions 1-44 (MDKANTNRSKVCGGSGEAKLTGKKRKNVSAKQSKKDAKKENSQM) are disordered.

It belongs to the GeBP family.

The sequence is that of Probable transcription factor At4g00232 from Arabidopsis thaliana (Mouse-ear cress).